A 154-amino-acid polypeptide reads, in one-letter code: Prefoldin subunit 5 (154 aa).

Position 2 is an N-acetylalanine (A2). K42 is subject to N6-acetyllysine. S56 is subject to Phosphoserine.

Belongs to the prefoldin subunit alpha family. Heterohexamer of two PFD-alpha type and four PFD-beta type subunits.

The protein localises to the nucleus. In terms of biological role, binds specifically to cytosolic chaperonin (c-CPN) and transfers target proteins to it. Binds to nascent polypeptide chain and promotes folding in an environment in which there are many competing pathways for nonnative proteins. Represses the transcriptional activity of MYC. The protein is Prefoldin subunit 5 (PFDN5) of Pongo abelii (Sumatran orangutan).